A 149-amino-acid chain; its full sequence is Transcriptional repressor NrdR (149 aa).

A zinc finger lies at Cys3–Cys34. Residues Pro49 to Glu139 enclose the ATP-cone domain.

It belongs to the NrdR family. Zn(2+) serves as cofactor.

In terms of biological role, negatively regulates transcription of bacterial ribonucleotide reductase nrd genes and operons by binding to NrdR-boxes. The protein is Transcriptional repressor NrdR of Ralstonia nicotianae (strain ATCC BAA-1114 / GMI1000) (Ralstonia solanacearum).